A 214-amino-acid chain; its full sequence is MCQEDEYDYLFKTVLIGDSGVGKSNLLMRFTRNEFNIESKSTIGVEFATRNIVLDNKKIKAQIWDTAGQERYRAITSAYYRGAVGALIVYDITKQSSFDNVGRWLKELREHADSNIVIMLVGNKTDLLHLRAVSTEEAQAFAAENNLSFIETSAMDASNVEEAFQTVLTEIFRIVSNRSLEAGDDGVHPTAGQTLNIAPTMNDLNKKKSSSQCC.

17-24 (GDSGVGKS) contributes to the GTP binding site. The Effector region motif lies at 39 to 47 (SKSTIGVEF). Residue threonine 42 is modified to Phosphothreonine. GTP is bound by residues 65 to 69 (DTAGQ) and 123 to 126 (NKTD). 2 S-geranylgeranyl cysteine lipidation sites follow: cysteine 213 and cysteine 214.

This sequence belongs to the small GTPase superfamily. Rab family.

Its subcellular location is the cell membrane. It is found in the endosome membrane. The protein localises to the golgi apparatus membrane. It localises to the cytoplasm. The protein resides in the nucleus. Has a role in retrograde traffricking of proteins from the endosome to the Golgi. Involved in the secretory pathway where it has a role in acid phosphatase secretion. This Schizosaccharomyces pombe (strain 972 / ATCC 24843) (Fission yeast) protein is GTP-binding protein ypt3 (ypt3).